The chain runs to 353 residues: Methionine import ATP-binding protein MetN (353 aa).

Residues 8–249 (LDQIDVTFHQ…PKQPLTQDFI (242 aa)) enclose the ABC transporter domain. 42–49 (GYSGAGKS) is an ATP binding site.

It belongs to the ABC transporter superfamily. Methionine importer (TC 3.A.1.24) family. The complex is composed of two ATP-binding proteins (MetN), two transmembrane proteins (MetI) and a solute-binding protein (MetQ).

The protein resides in the cell membrane. It carries out the reaction L-methionine(out) + ATP + H2O = L-methionine(in) + ADP + phosphate + H(+). It catalyses the reaction D-methionine(out) + ATP + H2O = D-methionine(in) + ADP + phosphate + H(+). Its function is as follows. Part of the ABC transporter complex MetNIQ involved in methionine import. Responsible for energy coupling to the transport system. The sequence is that of Methionine import ATP-binding protein MetN from Streptococcus pneumoniae (strain ATCC BAA-255 / R6).